The primary structure comprises 231 residues: Large ribosomal subunit protein uL1 (231 aa).

This sequence belongs to the universal ribosomal protein uL1 family. In terms of assembly, part of the 50S ribosomal subunit.

Binds directly to 23S rRNA. The L1 stalk is quite mobile in the ribosome, and is involved in E site tRNA release. Functionally, protein L1 is also a translational repressor protein, it controls the translation of the L11 operon by binding to its mRNA. In Francisella tularensis subsp. tularensis (strain WY96-3418), this protein is Large ribosomal subunit protein uL1.